Consider the following 394-residue polypeptide: Elongation factor Tu 1 (394 aa).

The tr-type G domain maps to 10–204; sequence KPHVNVGTIG…ALDTYIPEPE (195 aa). The G1 stretch occupies residues 19-26; it reads GHVDHGKT. 19–26 provides a ligand contact to GTP; it reads GHVDHGKT. A Mg(2+)-binding site is contributed by Thr26. Residues 60–64 form a G2 region; the sequence is GITIS. The tract at residues 81–84 is G3; sequence DCPG. GTP contacts are provided by residues 81 to 85 and 136 to 139; these read DCPGH and NKCD. The tract at residues 136-139 is G4; the sequence is NKCD. The tract at residues 174–176 is G5; it reads SAL.

This sequence belongs to the TRAFAC class translation factor GTPase superfamily. Classic translation factor GTPase family. EF-Tu/EF-1A subfamily. As to quaternary structure, monomer.

It is found in the cytoplasm. The enzyme catalyses GTP + H2O = GDP + phosphate + H(+). Its function is as follows. GTP hydrolase that promotes the GTP-dependent binding of aminoacyl-tRNA to the A-site of ribosomes during protein biosynthesis. The sequence is that of Elongation factor Tu 1 from Vibrio vulnificus (strain CMCP6).